A 185-amino-acid polypeptide reads, in one-letter code: GTP cyclohydrolase 1 (185 aa).

Zn(2+) contacts are provided by Cys-75, His-78, and Cys-146.

It belongs to the GTP cyclohydrolase I family. As to quaternary structure, toroid-shaped homodecamer, composed of two pentamers of five dimers.

The catalysed reaction is GTP + H2O = 7,8-dihydroneopterin 3'-triphosphate + formate + H(+). Its pathway is cofactor biosynthesis; 7,8-dihydroneopterin triphosphate biosynthesis; 7,8-dihydroneopterin triphosphate from GTP: step 1/1. This is GTP cyclohydrolase 1 from Alkalilimnicola ehrlichii (strain ATCC BAA-1101 / DSM 17681 / MLHE-1).